The chain runs to 444 residues: MVTIKCVKARQIYDSRGNPTVEADIHLDDGTYARAAVPSGASTGVYEALELRDGGKDYMGKGVYKAVKNVNEIIGPALVGKDPTQQTAIDNFMVQQLDGTVNEWGWCKQKLGANAILAVSLAVCKAGAQVKKIPLYQHIAEIAGNKNMVLPVPAFNVINGGSHAGNKLAMQEFMILPTGASSFKEAMKMGSEVYHNLKSVIKKKYGQDATNVGDEGGFAPNIQENKEGLELLKTAIEKAGYTGKVVIGMDVAASEFYKEDKSYDLNFKEENNDGSQRISGEALKDLYKSFVAEYPIVSIEDPFDQDDWEHYAKMTAECGEKVQIVGDDLLVTNPKRVKKAIDENPCNALLLKVNQIGSVTESIEAVKMSKKAGWGVMASHRSGETEDTFIADLSVGLSTGQIKTGAPCRSERLAKYNQLLRIEEELGDKAVYAGANFRRPVEPY.

2 residues coordinate substrate: histidine 163 and glutamate 172. Glutamate 215 (proton donor) is an active-site residue. Residues aspartate 250, glutamate 300, and aspartate 327 each coordinate Mg(2+). Positions 300 and 327 each coordinate substrate. Catalysis depends on lysine 352, which acts as the Proton acceptor. Substrate is bound by residues 379–382 (SHRS) and lysine 403.

This sequence belongs to the enolase family. In terms of assembly, homodimer. Mg(2+) is required as a cofactor.

The protein resides in the cytoplasm. The catalysed reaction is (2R)-2-phosphoglycerate = phosphoenolpyruvate + H2O. Its pathway is carbohydrate degradation; glycolysis; pyruvate from D-glyceraldehyde 3-phosphate: step 4/5. The sequence is that of Enolase (PGH1) from Mesembryanthemum crystallinum (Common ice plant).